Here is a 100-residue protein sequence, read N- to C-terminus: Large ribosomal subunit protein mL53 (100 aa).

It belongs to the mitochondrion-specific ribosomal protein mL53 family. As to quaternary structure, component of the mitochondrial large ribosomal subunit (mt-LSU). Mature yeast 74S mitochondrial ribosomes consist of a small (37S) and a large (54S) subunit. The 37S small subunit contains a 15S ribosomal RNA (15S mt-rRNA) and at least 32 different proteins. The 54S large subunit contains a 21S rRNA (21S mt-rRNA) and at least 45 different proteins.

It localises to the mitochondrion. Functionally, component of the mitochondrial ribosome (mitoribosome), a dedicated translation machinery responsible for the synthesis of mitochondrial genome-encoded proteins, including at least some of the essential transmembrane subunits of the mitochondrial respiratory chain. The mitoribosomes are attached to the mitochondrial inner membrane and translation products are cotranslationally integrated into the membrane. In Schizosaccharomyces pombe (strain 972 / ATCC 24843) (Fission yeast), this protein is Large ribosomal subunit protein mL53 (mrpl44).